A 359-amino-acid chain; its full sequence is Phosphoserine aminotransferase (359 aa).

Arg41 serves as a coordination point for L-glutamate. 4 residues coordinate pyridoxal 5'-phosphate: Trp101, Thr151, Asp170, and Gln193. Lys194 is subject to N6-(pyridoxal phosphate)lysine. 235 to 236 (NT) contacts pyridoxal 5'-phosphate.

The protein belongs to the class-V pyridoxal-phosphate-dependent aminotransferase family. SerC subfamily. As to quaternary structure, homodimer. The cofactor is pyridoxal 5'-phosphate.

The protein localises to the cytoplasm. The catalysed reaction is O-phospho-L-serine + 2-oxoglutarate = 3-phosphooxypyruvate + L-glutamate. It carries out the reaction 4-(phosphooxy)-L-threonine + 2-oxoglutarate = (R)-3-hydroxy-2-oxo-4-phosphooxybutanoate + L-glutamate. It functions in the pathway amino-acid biosynthesis; L-serine biosynthesis; L-serine from 3-phospho-D-glycerate: step 2/3. It participates in cofactor biosynthesis; pyridoxine 5'-phosphate biosynthesis; pyridoxine 5'-phosphate from D-erythrose 4-phosphate: step 3/5. Functionally, catalyzes the reversible conversion of 3-phosphohydroxypyruvate to phosphoserine and of 3-hydroxy-2-oxo-4-phosphonooxybutanoate to phosphohydroxythreonine. The protein is Phosphoserine aminotransferase of Laribacter hongkongensis (strain HLHK9).